A 754-amino-acid polypeptide reads, in one-letter code: Glutathione biosynthesis bifunctional protein GshAB (754 aa).

The glutamate--cysteine ligase stretch occupies residues Met-1–Ala-332. One can recognise an ATP-grasp domain in the interval Lys-488–Phe-746. Pro-515–Arg-573 contacts ATP. Residues Asp-695, Glu-716, and Asn-718 each contribute to the Mg(2+) site. Mn(2+)-binding residues include Asp-695, Glu-716, and Asn-718.

It in the N-terminal section; belongs to the glutamate--cysteine ligase type 1 family. Type 2 subfamily. In terms of assembly, monomer. The cofactor is Mg(2+). Mn(2+) is required as a cofactor.

It carries out the reaction L-cysteine + L-glutamate + ATP = gamma-L-glutamyl-L-cysteine + ADP + phosphate + H(+). The enzyme catalyses gamma-L-glutamyl-L-cysteine + glycine + ATP = glutathione + ADP + phosphate + H(+). Its pathway is sulfur metabolism; glutathione biosynthesis; glutathione from L-cysteine and L-glutamate: step 1/2. The protein operates within sulfur metabolism; glutathione biosynthesis; glutathione from L-cysteine and L-glutamate: step 2/2. Synthesizes glutathione from L-glutamate and L-cysteine via gamma-L-glutamyl-L-cysteine. The protein is Glutathione biosynthesis bifunctional protein GshAB of Streptococcus thermophilus (strain CNRZ 1066).